A 489-amino-acid chain; its full sequence is Cysteine--tRNA ligase (489 aa).

C27 serves as a coordination point for Zn(2+). Positions V29 to H39 match the 'HIGH' region motif. Zn(2+) contacts are provided by C211, H236, and E240. A 'KMSKS' region motif is present at residues K268 to S272. K271 serves as a coordination point for ATP.

This sequence belongs to the class-I aminoacyl-tRNA synthetase family. In terms of assembly, monomer. Requires Zn(2+) as cofactor.

Its subcellular location is the cytoplasm. It catalyses the reaction tRNA(Cys) + L-cysteine + ATP = L-cysteinyl-tRNA(Cys) + AMP + diphosphate. The chain is Cysteine--tRNA ligase from Prochlorococcus marinus (strain MIT 9215).